We begin with the raw amino-acid sequence, 744 residues long: MSDLRITLDPDFIAQTKKEVTPHWGELGWVTYKRTYARWLDDKNRSENWDETVKRVIEGNINLDPRLKNNPSKKTIHELTAEAKQLFRLVYGLAATPSGRNLWISGTDYQKRNGDSLNNCWFISIRPQKYGNSHIVPAYLTQDQVAPSMPFSFLFDQLMKGGGVGFSVVDENINQIPKLDQKVDLTIVIDKQSKSYDASLKLGATDLDEWKKTNQEKEDYIYYKLPDTREGWVLANARLIDMHFNSTNPENKKKLVLDISDIRPYGAKIHGFGGTASGPMPLIEMLFDINQILNERAGQKLTAVDATDICNLIGKTVVAGNVRRSAELALGSSNNQDFITMKQDKKKLYHHRWASNNSVAINSEFDNYQPIADSILHNGEPGVVNLELSRNYGRIKDGYQAGIDGEVEGTNPCGEISLANGEPCNLFEVFPFIAQKQGWDLKEAFKLAARYTKRVTFSPYDWEVSRKIINKNRRIGVSMSGIQDWILSTFGHRVVTGFKTATDSETGKEIKDPVYDPEIIKTVDGLYQAVVDADKDYSQELNCNTSIKHTTVKPSGTVAKLAGVSEGMHFHYSGYLIQRIRFQETDPLLPALKDCGYRTEPDIYTPHTICVEFPIKAANADSDNFASAGTVSIAEQFATQAFLQTYWSDNAVSCTITFQNDESDQIAPLLHQYRYAIKSTSLLPYYGGSLKQAPKEPISKEKYEKADNHITGNVEIVFEQTNEDQKGLELVDQSDCDNGACPIK.

Cysteines 120 and 424 form a disulfide. The interval S148–M159 is effector region-1. Residues V169 to V318 form an effector region-2 region. Active-site residues include C413 and E415. The interval F570–V631 is adenosylcobalamin-binding-1. An adenosylcobalamin-binding-2 region spans residues L690–E729.

It belongs to the class II ribonucleoside-triphosphate reductase family. Monomer. Requires adenosylcob(III)alamin as cofactor.

It carries out the reaction a 2'-deoxyribonucleoside 5'-triphosphate + [thioredoxin]-disulfide + H2O = a ribonucleoside 5'-triphosphate + [thioredoxin]-dithiol. Its activity is regulated as follows. Allosterically regulated by ATP and dNTP. This is Adenosylcobalamin-dependent ribonucleoside-triphosphate reductase (rtpR) from Lactobacillus gasseri (strain ATCC 33323 / DSM 20243 / BCRC 14619 / CIP 102991 / JCM 1131 / KCTC 3163 / NCIMB 11718 / NCTC 13722 / AM63).